The following is a 378-amino-acid chain: Leukocyte elastase inhibitor (378 aa).

The residue at position 1 (M1) is an N-acetylmethionine. K137 carries the post-translational modification N6-acetyllysine. S299 is modified (phosphoserine). The tract at residues 350-378 (DFIADHPFIFFIRHNPSSNILFLGRLSSP) is CARD-binding motif (CBM).

It belongs to the serpin family. Ov-serpin subfamily. In terms of assembly, monomer. Interacts (via C-terminus) with CASP1; CASP4 (via CARD domain) and CASP5; these interactions regulate the activity of inflammatory caspases. Interacts with PRTN3. Interacts with GZMH.

Its subcellular location is the secreted. It is found in the cytoplasm. It localises to the cytolytic granule. The protein resides in the early endosome. Functionally, neutrophil serine protease inhibitor that plays an essential role in the regulation of the innate immune response, inflammation and cellular homeostasis. Acts primarily to protect the cell from proteases released in the cytoplasm during stress or infection. These proteases are important in killing microbes but when released from granules, these potent enzymes also destroy host proteins and contribute to mortality. Regulates the activity of the neutrophil proteases elastase, cathepsin G, proteinase-3, chymase, chymotrypsin, and kallikrein-3. Also acts as a potent intracellular inhibitor of GZMH by directly blocking its proteolytic activity. During inflammation, limits the activity of inflammatory caspases CASP1, CASP4 and CASP5 by suppressing their caspase-recruitment domain (CARD) oligomerization and enzymatic activation. When secreted, promotes the proliferation of beta-cells via its protease inhibitory function. May be cleaved leading to a loss of its anti-protease activity and to the appearance of an endonuclease activity. However no catalytic site was identified. This Sus scrofa (Pig) protein is Leukocyte elastase inhibitor (SERPINB1).